Consider the following 241-residue polypeptide: Eukaryotic translation initiation factor 6 (241 aa).

It belongs to the eIF-6 family. Monomer. Associates with the 60S ribosomal subunit.

It localises to the cytoplasm. The protein localises to the nucleus. Its subcellular location is the nucleolus. Binds to the 60S ribosomal subunit and prevents its association with the 40S ribosomal subunit to form the 80S initiation complex in the cytoplasm. Is also involved in ribosome biogenesis. Associates with pre-60S subunits in the nucleus and is involved in its nuclear export. The sequence is that of Eukaryotic translation initiation factor 6 from Encephalitozoon cuniculi (strain GB-M1) (Microsporidian parasite).